A 1042-amino-acid chain; its full sequence is Probable inorganic carbon transporter subunit DabA (1042 aa).

Residues Cys462, Asp464, His721, and Cys736 each coordinate Zn(2+).

This sequence belongs to the inorganic carbon transporter (TC 9.A.2) DabA family. Forms a complex with DabB. Zn(2+) serves as cofactor.

It localises to the cell inner membrane. Its function is as follows. Part of an energy-coupled inorganic carbon pump. The chain is Probable inorganic carbon transporter subunit DabA from Nitrosomonas eutropha (strain DSM 101675 / C91 / Nm57).